We begin with the raw amino-acid sequence, 290 residues long: Elongation factor Ts (290 aa).

The tract at residues 83–86 (TDFV) is involved in Mg(2+) ion dislocation from EF-Tu.

It belongs to the EF-Ts family.

Its subcellular location is the cytoplasm. Associates with the EF-Tu.GDP complex and induces the exchange of GDP to GTP. It remains bound to the aminoacyl-tRNA.EF-Tu.GTP complex up to the GTP hydrolysis stage on the ribosome. This is Elongation factor Ts (tsf) from Aquifex aeolicus (strain VF5).